A 377-amino-acid chain; its full sequence is Chaperone protein DnaJ (377 aa).

The region spanning 5–70 (DYYEILGVSK…QKRAAYDQYG (66 aa)) is the J domain. A CR-type zinc finger spans residues 132-210 (GVTKEIRIPT…CHGHGRVEKT (79 aa)). Residues Cys145, Cys148, Cys162, Cys165, Cys184, Cys187, Cys198, and Cys201 each contribute to the Zn(2+) site. CXXCXGXG motif repeat units follow at residues 145-152 (CDVCHGSG), 162-169 (CPTCHGAG), 184-191 (CPHCQGRG), and 198-205 (CNKCHGHG).

Belongs to the DnaJ family. As to quaternary structure, homodimer. Requires Zn(2+) as cofactor.

It localises to the cytoplasm. Functionally, participates actively in the response to hyperosmotic and heat shock by preventing the aggregation of stress-denatured proteins and by disaggregating proteins, also in an autonomous, DnaK-independent fashion. Unfolded proteins bind initially to DnaJ; upon interaction with the DnaJ-bound protein, DnaK hydrolyzes its bound ATP, resulting in the formation of a stable complex. GrpE releases ADP from DnaK; ATP binding to DnaK triggers the release of the substrate protein, thus completing the reaction cycle. Several rounds of ATP-dependent interactions between DnaJ, DnaK and GrpE are required for fully efficient folding. Also involved, together with DnaK and GrpE, in the DNA replication of plasmids through activation of initiation proteins. The chain is Chaperone protein DnaJ from Klebsiella pneumoniae (strain 342).